A 290-amino-acid polypeptide reads, in one-letter code: Cbb3-type cytochrome c oxidase subunit CcoP (290 aa).

The interval 1–22 (MSVKPTKQKPGEPPTTGHSWDG) is disordered. At 1–37 (MSVKPTKQKPGEPPTTGHSWDGIEEFDNPMPRWWLWT) the chain is on the cytoplasmic side. Residues 38-58 (FYVTIVWAIGYSILYPAWPLI) form a helical membrane-spanning segment. Residues 59-290 (NGATNGLIGH…VYVHGLGGGE (232 aa)) lie on the Periplasmic side of the membrane. Cytochrome c domains lie at 109 to 199 (YATN…LQIS) and 206 to 287 (ALSA…HGLG). 8 residues coordinate heme c: cysteine 122, cysteine 125, histidine 126, methionine 174, cysteine 219, cysteine 222, histidine 223, and methionine 264.

Belongs to the CcoP / FixP family. In terms of assembly, component of the cbb3-type cytochrome c oxidase at least composed of CcoN, CcoO, CcoQ and CcoP. It depends on heme c as a cofactor.

The protein resides in the cell inner membrane. Its pathway is energy metabolism; oxidative phosphorylation. Its function is as follows. C-type cytochrome. Part of the cbb3-type cytochrome c oxidase complex. CcoP subunit is required for transferring electrons from donor cytochrome c via its heme groups to CcoO subunit. From there, electrons are shuttled to the catalytic binuclear center of CcoN subunit where oxygen reduction takes place. The complex also functions as a proton pump. This chain is Cbb3-type cytochrome c oxidase subunit CcoP, found in Cereibacter sphaeroides (strain ATCC 17023 / DSM 158 / JCM 6121 / CCUG 31486 / LMG 2827 / NBRC 12203 / NCIMB 8253 / ATH 2.4.1.) (Rhodobacter sphaeroides).